We begin with the raw amino-acid sequence, 612 residues long: Elongation factor 4 (612 aa).

In terms of domain architecture, tr-type G spans 11–193 (KHIRNFSIIA…RIVTDVPAPS (183 aa)). GTP-binding positions include 23 to 28 (DHGKST) and 140 to 143 (NKVD).

It belongs to the TRAFAC class translation factor GTPase superfamily. Classic translation factor GTPase family. LepA subfamily.

It localises to the cell membrane. It carries out the reaction GTP + H2O = GDP + phosphate + H(+). In terms of biological role, required for accurate and efficient protein synthesis under certain stress conditions. May act as a fidelity factor of the translation reaction, by catalyzing a one-codon backward translocation of tRNAs on improperly translocated ribosomes. Back-translocation proceeds from a post-translocation (POST) complex to a pre-translocation (PRE) complex, thus giving elongation factor G a second chance to translocate the tRNAs correctly. Binds to ribosomes in a GTP-dependent manner. The chain is Elongation factor 4 from Lacticaseibacillus paracasei (strain ATCC 334 / BCRC 17002 / CCUG 31169 / CIP 107868 / KCTC 3260 / NRRL B-441) (Lactobacillus paracasei).